A 197-amino-acid chain; its full sequence is Pyridoxal 5'-phosphate synthase subunit PdxT (197 aa).

Position 53–55 (glycine 53–serine 55) interacts with L-glutamine. Residue cysteine 85 is the Nucleophile of the active site. L-glutamine is bound by residues arginine 114 and isoleucine 142 to arginine 143. Residues histidine 179 and glutamate 181 each act as charge relay system in the active site.

It belongs to the glutaminase PdxT/SNO family. In terms of assembly, in the presence of PdxS, forms a dodecamer of heterodimers. Only shows activity in the heterodimer.

The catalysed reaction is aldehydo-D-ribose 5-phosphate + D-glyceraldehyde 3-phosphate + L-glutamine = pyridoxal 5'-phosphate + L-glutamate + phosphate + 3 H2O + H(+). It catalyses the reaction L-glutamine + H2O = L-glutamate + NH4(+). It participates in cofactor biosynthesis; pyridoxal 5'-phosphate biosynthesis. Catalyzes the hydrolysis of glutamine to glutamate and ammonia as part of the biosynthesis of pyridoxal 5'-phosphate. The resulting ammonia molecule is channeled to the active site of PdxS. The polypeptide is Pyridoxal 5'-phosphate synthase subunit PdxT (Thermococcus onnurineus (strain NA1)).